Reading from the N-terminus, the 83-residue chain is Small ribosomal subunit protein eS21 (83 aa).

Position 1 is an N-acetylmethionine (Met1). Lys81 carries the post-translational modification N6-acetyllysine.

This sequence belongs to the eukaryotic ribosomal protein eS21 family. Component of the 40S small ribosomal subunit.

It localises to the cytoplasm. It is found in the cytosol. The protein resides in the rough endoplasmic reticulum. Its function is as follows. Component of the small ribosomal subunit. The ribosome is a large ribonucleoprotein complex responsible for the synthesis of proteins in the cell. The polypeptide is Small ribosomal subunit protein eS21 (Rps21) (Mus musculus (Mouse)).